The sequence spans 444 residues: Cysteine proteinase 2 (444 aa).

A signal peptide (or 27) is located at residues 1–19; that stretch reads MATSRAALCAVAVVCVVLA. Positions 20–124 are cleaved as a propeptide — activation peptide; sequence AACAPARAIH…HYRKARADLS (105 aa). An intrachain disulfide couples Cys147 to Cys188. Residue Cys150 is part of the active site. Asn228 carries N-linked (GlcNAc...) asparagine glycosylation. Active-site residues include His289 and Asn309. Residue Asn372 is glycosylated (N-linked (GlcNAc...) asparagine).

It belongs to the peptidase C1 family.

Its subcellular location is the lysosome. Its function is as follows. The cysteine proteinases have a potential role in host-parasite interaction and virulence. This chain is Cysteine proteinase 2 (CYS2), found in Leishmania pifanoi.